Consider the following 211-residue polypeptide: Small ribosomal subunit protein uS3 (211 aa).

A KH type-2 domain is found at 16–85 (IDEYFKTKLV…NPQIEVKQVE (70 aa)).

This sequence belongs to the universal ribosomal protein uS3 family. In terms of assembly, part of the 30S ribosomal subunit.

Its function is as follows. Binds the lower part of the 30S subunit head. In Methanococcus maripaludis (strain C5 / ATCC BAA-1333), this protein is Small ribosomal subunit protein uS3.